A 1052-amino-acid polypeptide reads, in one-letter code: Focal adhesion kinase 1 (1052 aa).

The segment at 1–27 is disordered; that stretch reads MAAAYLDPNLNHTPSSSTKTHLGTGME. An N-acetylalanine modification is found at A2. Phosphotyrosine is present on Y5. A compositionally biased stretch (polar residues) spans 10–21; it reads LNHTPSSSTKTH. T13 is modified (phosphothreonine). A phosphoserine mark is found at S29 and S54. An FERM domain is found at 35–355; that stretch reads RVLKVFHYFE…GYCRLVNGAT (321 aa). K152 is covalently cross-linked (Glycyl lysine isopeptide (Lys-Gly) (interchain with G-Cter in SUMO)). Phosphotyrosine is present on residues Y397 and Y407. The residue at position 397 (Y397) is a Phosphotyrosine; by autocatalysis. Residues 428 to 434, K454, and 500 to 502 each bind ATP; these read IGEGQFG and ELC. The 250-residue stretch at 431-680 folds into the Protein kinase domain; the sequence is GQFGDVHQGV…ELKAQLSTIL (250 aa). The Proton acceptor role is filled by D546. Phosphotyrosine is present on Y570. Phosphotyrosine; by RET and SRC is present on residues Y576 and Y577. A Phosphoserine modification is found at S580. Basic and acidic residues predominate over residues 685–697; that stretch reads VQQEERMRMESRR. Disordered stretches follow at residues 685 to 734 and 837 to 921; these read VQQE…PSPQ and VRLS…DRSN. Positions 707-1052 are interaction with TGFB1I1; it reads GSDEAPPKPS…LKMLGQTRPH (346 aa). S722 is modified (phosphoserine). At S732 the chain carries Phosphoserine; by CDK5. The segment covering 837-849 has biased composition (basic and acidic residues); that stretch reads VRLSRGSIDREDG. S843 is modified (phosphoserine). At Y861 the chain carries Phosphotyrosine. The span at 869–880 shows a compositional bias: pro residues; that stretch reads PAAPPKKPPRPG. Residues 886-896 are compositionally biased toward polar residues; the sequence is SNLSSISSPAD. S910 is subject to Phosphoserine. The tract at residues 912–1052 is interaction with ARHGEF28; sequence PPTANLDRSN…LKMLGQTRPH (141 aa). T914 is modified (phosphothreonine). A Phosphotyrosine; by SRC modification is found at Y925.

It belongs to the protein kinase superfamily. Tyr protein kinase family. FAK subfamily. Interacts with GIT1. Component of a complex that contains at least FER, CTTN and PTK2/FAK1. Interacts with BMX. Interacts with STEAP4. Interacts with ZFYVE21. Interacts with ESR1. Interacts with FGR, FLT4 and RET. Interacts with EPHA2 in resting cells; activation of EPHA2 recruits PTPN11, leading to dephosphorylation of PTK2/FAK1 and dissociation of the complex. Interacts with EPHA1 (kinase activity-dependent). Interacts with MISP. Interacts with PIAS1. Interacts with ARHGAP26 and SHC1. Interacts with RB1CC1; this inhibits PTK2/FAK1 activity and activation of downstream signaling pathways. Interacts with P53/TP53. Interacts with STAT1. Interacts with WASL. Interacts with ARHGEF7. Interacts with DCC. Interacts (via first Pro-rich region) with CAS family members (via SH3 domain), including BCAR1, BCAR3 and CASS4. Interacts with NEDD9 (via C-terminus). Interacts with SORBS1. Interacts with ARHGEF28. Interacts with SHB. Part of a complex composed of THSD1, PTK2/FAK1, TLN1 and VCL. Interacts with PXN and TLN1. Interacts with TGFB1I1. Interacts with PIK3R1 or PIK3R2. Interacts with SRC, GRB2 and GRB7. Interacts with LPXN (via LD motif 3). Interacts with CD36. Interacts with EMP2; regulates PTK2 activation and localization. Interacts with DSCAM. Interacts with AMBRA1. Interacts (when tyrosine-phosphorylated) with tensin TNS1; the interaction is increased by phosphorylation of TNS1. In terms of processing, phosphorylated on tyrosine residues upon activation, e.g. upon integrin signaling. Tyr-397 is the major autophosphorylation site, but other kinases can also phosphorylate this residue. Phosphorylation at Tyr-397 promotes interaction with SRC and SRC family members, leading to phosphorylation at Tyr-576, Tyr-577 and at additional tyrosine residues. FGR promotes phosphorylation at Tyr-397 and Tyr-576. FER promotes phosphorylation at Tyr-577, Tyr-861 and Tyr-925, even when cells are not adherent. Tyr-397, Tyr-576 and Ser-722 are phosphorylated only when cells are adherent. Phosphorylation at Tyr-397 is important for interaction with BMX, PIK3R1 and SHC1. Phosphorylation at Tyr-925 is important for interaction with GRB2. Dephosphorylated by PTPN11; PTPN11 is recruited to PTK2 via EPHA2 (tyrosine phosphorylated). Microtubule-induced dephosphorylation at Tyr-397 is crucial for the induction of focal adhesion disassembly; this dephosphorylation could be catalyzed by PTPN11 and regulated by ZFYVE21. Phosphorylation on tyrosine residues is enhanced by NTN1. Post-translationally, sumoylated; this enhances autophosphorylation.

The protein localises to the cell junction. It localises to the focal adhesion. Its subcellular location is the cell membrane. The protein resides in the cytoplasm. It is found in the perinuclear region. The protein localises to the cell cortex. It localises to the cytoskeleton. Its subcellular location is the microtubule organizing center. The protein resides in the centrosome. It is found in the nucleus. The protein localises to the cilium basal body. It catalyses the reaction L-tyrosyl-[protein] + ATP = O-phospho-L-tyrosyl-[protein] + ADP + H(+). Its activity is regulated as follows. Subject to autoinhibition, mediated by interactions between the FERM domain and the kinase domain. Activated by autophosphorylation at Tyr-397. This promotes interaction with SRC and phosphorylation at Tyr-576 and Tyr-577 in the kinase activation loop by SRC. Phosphorylation at Tyr-397, Tyr-576 and Tyr-577 is required for maximal kinase activity. In terms of biological role, non-receptor protein-tyrosine kinase that plays an essential role in regulating cell migration, adhesion, spreading, reorganization of the actin cytoskeleton, formation and disassembly of focal adhesions and cell protrusions, cell cycle progression, cell proliferation and apoptosis. Required for early embryonic development and placenta development. Required for embryonic angiogenesis, normal cardiomyocyte migration and proliferation, and normal heart development. Regulates axon growth and neuronal cell migration, axon branching and synapse formation; required for normal development of the nervous system. Plays a role in osteogenesis and differentiation of osteoblasts. Functions in integrin signal transduction, but also in signaling downstream of numerous growth factor receptors, G-protein coupled receptors (GPCR), EPHA2, netrin receptors and LDL receptors. Forms multisubunit signaling complexes with SRC and SRC family members upon activation; this leads to the phosphorylation of additional tyrosine residues, creating binding sites for scaffold proteins, effectors and substrates. Regulates numerous signaling pathways. Promotes activation of phosphatidylinositol 3-kinase and the AKT1 signaling cascade. Promotes activation of MAPK1/ERK2, MAPK3/ERK1 and the MAP kinase signaling cascade. Promotes localized and transient activation of guanine nucleotide exchange factors (GEFs) and GTPase-activating proteins (GAPs), and thereby modulates the activity of Rho family GTPases. Signaling via CAS family members mediates activation of RAC1. Phosphorylates NEDD9 following integrin stimulation. Recruits the ubiquitin ligase MDM2 to P53/TP53 in the nucleus, and thereby regulates P53/TP53 activity, P53/TP53 ubiquitination and proteasomal degradation. Phosphorylates SRC; this increases SRC kinase activity. Phosphorylates ACTN1, ARHGEF7, GRB7, RET and WASL. Promotes phosphorylation of PXN and STAT1; most likely PXN and STAT1 are phosphorylated by a SRC family kinase that is recruited to autophosphorylated PTK2/FAK1, rather than by PTK2/FAK1 itself. Promotes phosphorylation of BCAR1; GIT2 and SHC1; this requires both SRC and PTK2/FAK1. Promotes phosphorylation of BMX and PIK3R1. Its function is as follows. Does not contain a kinase domain and inhibits PTK2/FAK1 phosphorylation and signaling. Its enhanced expression can attenuate the nuclear accumulation of LPXN and limit its ability to enhance serum response factor (SRF)-dependent gene transcription. The polypeptide is Focal adhesion kinase 1 (Mus musculus (Mouse)).